The sequence spans 45 residues: Mu-conotoxin-like Cal 12.1.1d (45 aa).

4 cysteine pairs are disulfide-bonded: cysteine 3-cysteine 16, cysteine 11-cysteine 28, cysteine 18-cysteine 33, and cysteine 27-cysteine 39. A 6'-bromotryptophan modification is found at tryptophan 17. Position 21 is a 4-carboxyglutamate (glutamate 21). A 4-hydroxyproline modification is found at proline 23. Tryptophan 37 and tryptophan 38 each carry 6'-bromotryptophan. Proline 40 is subject to 4-hydroxyproline. Tryptophan 44 bears the 6'-bromotryptophan mark.

Expressed by the venom duct.

The protein resides in the secreted. Functionally, mu-conotoxins block voltage-gated sodium channels. This toxin reversibly blocks voltage-gated sodium channel in cephalopods, with no alteration in the voltage dependence of sodium conductance or on the kinetics of inactivation. The sequence is that of Mu-conotoxin-like Cal 12.1.1d from Californiconus californicus (California cone).